The primary structure comprises 325 residues: Tetraacyldisaccharide 4'-kinase (325 aa).

55–62 (TAGGNGKT) is a binding site for ATP.

Belongs to the LpxK family.

The enzyme catalyses a lipid A disaccharide + ATP = a lipid IVA + ADP + H(+). It participates in glycolipid biosynthesis; lipid IV(A) biosynthesis; lipid IV(A) from (3R)-3-hydroxytetradecanoyl-[acyl-carrier-protein] and UDP-N-acetyl-alpha-D-glucosamine: step 6/6. Functionally, transfers the gamma-phosphate of ATP to the 4'-position of a tetraacyldisaccharide 1-phosphate intermediate (termed DS-1-P) to form tetraacyldisaccharide 1,4'-bis-phosphate (lipid IVA). The sequence is that of Tetraacyldisaccharide 4'-kinase from Citrobacter koseri (strain ATCC BAA-895 / CDC 4225-83 / SGSC4696).